Here is a 499-residue protein sequence, read N- to C-terminus: Potassium voltage-gated channel subfamily A member 2 (499 aa).

Residues 1-26 are disordered; it reads MTVATGDPVDEAAALPGHPQDTYDPE. The tract at residues 1 to 125 is tetramerization domain; the sequence is MTVATGDPVD…YELGEEAMEM (125 aa). Topologically, residues 1–160 are cytoplasmic; sequence MTVATGDPVD…LLFEYPESSG (160 aa). Residues 161-182 traverse the membrane as a helical segment; it reads PARIIAIVSVMVILISIVSFCL. Topologically, residues 183–221 are extracellular; that stretch reads ETLPIFRDENEDMHGGGVTFHTYSNSTIGYQQSTSFTDP. A glycan (N-linked (GlcNAc...) asparagine) is linked at N207. Residues 222–243 form a helical membrane-spanning segment; sequence FFIVETLCIIWFSFEFLVRFFA. A lipid anchor (S-palmitoyl cysteine) is attached at C244. At 244 to 254 the chain is on the cytoplasmic side; it reads CPSKAGFFTNI. A helical membrane pass occupies residues 255 to 275; it reads MNIIDIVAIIPYFITLGTELA. At 276–289 the chain is on the extracellular side; it reads EKPEDAQQGQQAMS. A helical; Voltage-sensor membrane pass occupies residues 290–310; the sequence is LAILRVIRLVRVFRIFKLSRH. Residues 311-325 lie on the Cytoplasmic side of the membrane; it reads SKGLQILGQTLKASM. Residues 312 to 325 are S4-S5 linker; sequence KGLQILGQTLKASM. A helical transmembrane segment spans residues 326 to 347; that stretch reads RELGLLIFFLFIGVILFSSAVY. At 348 to 361 the chain is on the extracellular side; it reads FAEADERDSQFPSI. An intramembrane region (helical) is located at residues 362–373; it reads PDAFWWAVVSMT. Residues 374-379 carry the Selectivity filter motif; the sequence is TVGYGD. An intramembrane segment occupies 374–381; sequence TVGYGDMV. At 382–388 the chain is on the extracellular side; that stretch reads PTTIGGK. Residues 389–417 form a helical membrane-spanning segment; the sequence is IVGSLCAIAGVLTIALPVPVIVSNFNYFY. Residues 418–499 are Cytoplasmic-facing; sequence HRETEGEEQA…VNITKMLTDV (82 aa). Y429 is subject to Phosphotyrosine. 4 positions are modified to phosphoserine: S434, S440, S441, and S449. Position 458 is a phosphotyrosine (Y458). S468 is subject to Phosphoserine. The short motif at 497-499 is the PDZ-binding element; it reads TDV.

Belongs to the potassium channel family. A (Shaker) (TC 1.A.1.2) subfamily. Kv1.2/KCNA2 sub-subfamily. In terms of assembly, homotetramer and heterotetramer with other channel-forming alpha subunits, such as KCNA1, KCNA4, KCNA5, KCNA6 and KCNA7. Channel activity is regulated by interaction with beta subunits, including KCNAB1 and KCNAB2. Identified in a complex with KCNA1 and KCNAB2. Identified in a complex with KCNA5 and KCNAB1. Identified in a complex with KCNA4 and FYN. Interacts with PTK2B. Interacts (via C-terminus) with CTTN. Interacts with ADAM22. Interacts with CNTNAP2. Interacts (via C-terminus) with the PDZ domains of DLG1, DLG2 and DLG4. Interacts (via N-terminal cytoplasmic domain) with RHOA (GTP-bound form); this regulates channel activity by reducing location at the cell surface in response to CHRM1 activation. Interacts with DRD2. Interacts with SIGMAR1; cocaine consumption leads to increased interaction. Interacts with ADAM11. Interacts with LYNX1. Phosphorylated on tyrosine residues; phosphorylation increases in response to ischemia. Phosphorylated on tyrosine residues by activated PTK2B/PYK2. Phosphorylation on tyrosine residues suppresses ion channel activity. Phosphorylated on tyrosine residues in response to CHRM1 activation; this abolishes interaction with CTTN. This is probably due to endocytosis of the phosphorylated channel subunits. Phosphorylated on serine residues in response to increased cAMP levels; phosphorylation is apparently not catalyzed by PKA. Post-translationally, N-glycosylated, with complex, sialylated N-glycans. Detected in brain. Detected in cerebellum. Detected in mitral cells in the olfactory bulb. Detected in cochlea. Detected in cerebellum, particularly in the basket cell axon plexus and in the terminal regions around Purkinje cells (at protein level). Detected in juxtaparanodal regions in sciatic nerve. Detected in Schwann cells from sciatic nerve. Detected in dopamine neurons in substantia nigra. Detected in large myelinated fibers in juxtaparanodes in the CA3 and CA1 areas of the hippocampus. Detected in brain, in punctae on fiber tracts in brain stem and spinal cord, and on axons in the juxtaparanodal regions of the node of Ranvier (at protein level). Detected in dopamine neurons in the midbrain.

It is found in the cell membrane. The protein localises to the membrane. The protein resides in the cell projection. Its subcellular location is the axon. It localises to the synapse. It is found in the endoplasmic reticulum membrane. The protein localises to the lamellipodium membrane. The protein resides in the synaptosome. Its subcellular location is the presynaptic cell membrane. It localises to the dendrite. It is found in the perikaryon. The protein localises to the cell junction. The protein resides in the paranodal septate junction. It carries out the reaction K(+)(in) = K(+)(out). Inhibited by 4-aminopyridine (4-AP), dendrotoxin (DTX) and charybdotoxin (CTX), but not by tetraethylammonium (TEA). Inhibited by tityustoxin-K alpha (TsTX-Kalpha), a toxin that is highly specific for KCNA2. Inhibited by maurotoxin. Inhibited by kappaM conotoxins kappaM-RIIIJ and kappaM-RIIIK. In terms of biological role, voltage-gated potassium channel that mediates transmembrane potassium transport in excitable membranes, primarily in the brain and the central nervous system, but also in the cardiovascular system. Prevents aberrant action potential firing and regulates neuronal output. Forms tetrameric potassium-selective channels through which potassium ions pass in accordance with their electrochemical gradient. The channel alternates between opened and closed conformations in response to the voltage difference across the membrane. Can form functional homotetrameric channels and heterotetrameric channels that contain variable proportions of KCNA1, KCNA2, KCNA4, KCNA5, KCNA6, KCNA7, and possibly other family members as well; channel properties depend on the type of alpha subunits that are part of the channel. Channel properties are modulated by cytoplasmic beta subunits that regulate the subcellular location of the alpha subunits and promote rapid inactivation of delayed rectifier potassium channels. In vivo, membranes probably contain a mixture of heteromeric potassium channel complexes, making it difficult to assign currents observed in intact tissues to any particular potassium channel family member. Homotetrameric KCNA2 forms a delayed-rectifier potassium channel that opens in response to membrane depolarization, followed by slow spontaneous channel closure. In contrast, a heteromultimer formed by KCNA2 and KCNA4 shows rapid inactivation. Contributes to the regulation of action potentials in neurons. KCNA2-containing channels play a presynaptic role and prevent hyperexcitability and aberrant action potential firing. Response to toxins that are selective for KCNA1, respectively for KCNA2, suggests that heteromeric potassium channels composed of both KCNA1 and KCNA2 play a role in pacemaking and regulate the output of deep cerebellar nuclear neurons. Response to toxins that are selective for KCNA2-containing potassium channels suggests that in Purkinje cells, dendritic subthreshold KCNA2-containing potassium channels prevent random spontaneous calcium spikes, suppressing dendritic hyperexcitability without hindering the generation of somatic action potentials, and thereby play an important role in motor coordination. KCNA2-containing channels play a role in GABAergic transmission from basket cells to Purkinje cells in the cerebellum, and thereby play an import role in motor coordination. Plays a role in the induction of long-term potentiation of neuron excitability in the CA3 layer of the hippocampus. May function as down-stream effector for G protein-coupled receptors and inhibit GABAergic inputs to basolateral amygdala neurons. May contribute to the regulation of neurotransmitter release, such as gamma-aminobutyric acid (GABA). Contributes to the regulation of the axonal release of the neurotransmitter dopamine. Reduced KCNA2 expression plays a role in the perception of neuropathic pain after peripheral nerve injury, but not acute pain. Plays a role in the regulation of the time spent in non-rapid eye movement (NREM) sleep. The protein is Potassium voltage-gated channel subfamily A member 2 (Kcna2) of Mus musculus (Mouse).